The sequence spans 180 residues: dCTP deaminase, dUMP-forming (180 aa).

DCTP contacts are provided by residues 100 to 105 (RSSLGR), D117, 125 to 127 (TLE), Q146, Y160, and Q167. E127 serves as the catalytic Proton donor/acceptor.

Belongs to the dCTP deaminase family. In terms of assembly, homotrimer.

It catalyses the reaction dCTP + 2 H2O = dUMP + NH4(+) + diphosphate. The protein operates within pyrimidine metabolism; dUMP biosynthesis; dUMP from dCTP: step 1/1. Its function is as follows. Bifunctional enzyme that catalyzes both the deamination of dCTP to dUTP and the hydrolysis of dUTP to dUMP without releasing the toxic dUTP intermediate. The polypeptide is dCTP deaminase, dUMP-forming (Persephonella marina (strain DSM 14350 / EX-H1)).